The following is a 182-amino-acid chain: Nucleoid-associated protein At2g24020, chloroplastic (182 aa).

A chloroplast-targeting transit peptide spans 1–48 (MASMAATTNFTKSMLFPFSHVSGNASLNSQRRTWPKQYKSKNGYRSLR).

The protein belongs to the YbaB/EbfC family. Homodimer. Interacts with ALB3 and ALB4.

The protein resides in the plastid. The protein localises to the chloroplast stroma. In terms of biological role, participates with ALB4 in thylakoid protein targeting. May function with specific subset of thylakoidal proteins. Binds to DNA and alters its conformation. May be involved in regulation of gene expression, nucleoid organization and DNA protection. This chain is Nucleoid-associated protein At2g24020, chloroplastic, found in Arabidopsis thaliana (Mouse-ear cress).